Here is a 197-residue protein sequence, read N- to C-terminus: Holliday junction resolvase RecU (197 aa).

Mg(2+) is bound by residues Thr82, Asp84, Glu97, and Gln116.

The protein belongs to the RecU family. Requires Mg(2+) as cofactor.

It is found in the cytoplasm. It catalyses the reaction Endonucleolytic cleavage at a junction such as a reciprocal single-stranded crossover between two homologous DNA duplexes (Holliday junction).. In terms of biological role, endonuclease that resolves Holliday junction intermediates in genetic recombination. Cleaves mobile four-strand junctions by introducing symmetrical nicks in paired strands. Promotes annealing of linear ssDNA with homologous dsDNA. Required for DNA repair, homologous recombination and chromosome segregation. The sequence is that of Holliday junction resolvase RecU from Streptococcus mutans serotype c (strain ATCC 700610 / UA159).